The chain runs to 302 residues: Small ribosomal subunit biogenesis GTPase RsgA (302 aa).

A CP-type G domain is found at 69–229 (KNLLIRPKVA…VGDTPGFSKV (161 aa)). GTP-binding positions include 118-121 (NKID) and 172-180 (GPSGVGKSS). 4 residues coordinate Zn(2+): Cys-252, Cys-257, His-259, and Cys-265.

It belongs to the TRAFAC class YlqF/YawG GTPase family. RsgA subfamily. In terms of assembly, monomer. Associates with 30S ribosomal subunit, binds 16S rRNA. The cofactor is Zn(2+).

Its subcellular location is the cytoplasm. In terms of biological role, one of several proteins that assist in the late maturation steps of the functional core of the 30S ribosomal subunit. Helps release RbfA from mature subunits. May play a role in the assembly of ribosomal proteins into the subunit. Circularly permuted GTPase that catalyzes slow GTP hydrolysis, GTPase activity is stimulated by the 30S ribosomal subunit. The polypeptide is Small ribosomal subunit biogenesis GTPase RsgA (Aquifex aeolicus (strain VF5)).